The following is a 292-amino-acid chain: G1/S-specific cyclin-D3 (292 aa).

Residues 27-152 (VLQSLLRLEE…LVLGKLKWDL (126 aa)) enclose the Cyclin N-terminal domain. The segment at 255-292 (LREAAQTSPSPAPKAPRGSSSQGPSQTSTPTDVTAIHL) is disordered. 2 positions are modified to phosphoserine: Ser-264 and Ser-279. The segment covering 272 to 285 (GSSSQGPSQTSTPT) has biased composition (low complexity). Thr-283 is modified (phosphothreonine).

Belongs to the cyclin family. Cyclin D subfamily. Interacts with the CDK4 and CDK6 protein kinases to form a serine/threonine kinase holoenzyme complex. The cyclin subunit imparts substrate specificity to the complex. Interacts with ATF5. Interacts with EIF3K. Component of the ternary complex cyclin D/CDK4/CDKN1B required for nuclear translocation and modulation of CDK4-mediated kinase activity. Can form similar complexes with either CDKN1A or CDKN2A. Post-translationally, phosphorylation at Thr-283 by MAP kinases is required for ubiquitination and degradation by the DCX(AMBRA1) complex. In terms of processing, ubiquitinated by the DCX(AMBRA1) complex during the transition from G1 to S cell phase, leading to its degradation: ubiquitination is dependent on Thr-283 phosphorylation. The DCX(AMBRA1) complex represents the major regulator of CCND3 stability during the G1/S transition. Polyubiquitinated by the SCF(FBXL2) complex, leading to proteasomal degradation.

Its subcellular location is the nucleus. The protein localises to the cytoplasm. Functionally, regulatory component of the cyclin D3-CDK4 (DC) complex that phosphorylates and inhibits members of the retinoblastoma (RB) protein family including RB1 and regulates the cell-cycle during G(1)/S transition. Phosphorylation of RB1 allows dissociation of the transcription factor E2F from the RB/E2F complex and the subsequent transcription of E2F target genes which are responsible for the progression through the G(1) phase. Hypophosphorylates RB1 in early G(1) phase. Cyclin D-CDK4 complexes are major integrators of various mitogenenic and antimitogenic signals. Component of the ternary complex, cyclin D3/CDK4/CDKN1B, required for nuclear translocation and activity of the cyclin D-CDK4 complex. Shows transcriptional coactivator activity with ATF5 independently of CDK4. The protein is G1/S-specific cyclin-D3 (CCND3) of Bos taurus (Bovine).